Consider the following 106-residue polypeptide: Putative double-stranded DNA mimic protein VIBHAR_02752 (106 aa).

This sequence belongs to the putative dsDNA mimic protein family.

Its function is as follows. May act as a double-stranded DNA (dsDNA) mimic. Probably regulates the activity of a dsDNA-binding protein. The chain is Putative double-stranded DNA mimic protein VIBHAR_02752 from Vibrio campbellii (strain ATCC BAA-1116).